A 383-amino-acid chain; its full sequence is Galactokinase (383 aa).

34–37 (EHTD) serves as a coordination point for substrate. 124–130 (GAGLSSS) is a binding site for ATP. Mg(2+) contacts are provided by S130 and E162. D174 acts as the Proton acceptor in catalysis. Y223 serves as a coordination point for substrate.

Belongs to the GHMP kinase family. GalK subfamily.

Its subcellular location is the cytoplasm. The enzyme catalyses alpha-D-galactose + ATP = alpha-D-galactose 1-phosphate + ADP + H(+). The protein operates within carbohydrate metabolism; galactose metabolism. Functionally, catalyzes the transfer of the gamma-phosphate of ATP to D-galactose to form alpha-D-galactose-1-phosphate (Gal-1-P). In Serratia proteamaculans (strain 568), this protein is Galactokinase.